Here is a 153-residue protein sequence, read N- to C-terminus: NAD(P)H-quinone oxidoreductase subunit N (153 aa).

Belongs to the complex I NdhN subunit family. In terms of assembly, NDH-1 can be composed of about 15 different subunits; different subcomplexes with different compositions have been identified which probably have different functions.

Its subcellular location is the cellular thylakoid membrane. It carries out the reaction a plastoquinone + NADH + (n+1) H(+)(in) = a plastoquinol + NAD(+) + n H(+)(out). The enzyme catalyses a plastoquinone + NADPH + (n+1) H(+)(in) = a plastoquinol + NADP(+) + n H(+)(out). In terms of biological role, NDH-1 shuttles electrons from an unknown electron donor, via FMN and iron-sulfur (Fe-S) centers, to quinones in the respiratory and/or the photosynthetic chain. The immediate electron acceptor for the enzyme in this species is believed to be plastoquinone. Couples the redox reaction to proton translocation, and thus conserves the redox energy in a proton gradient. Cyanobacterial NDH-1 also plays a role in inorganic carbon-concentration. In Prochlorococcus marinus (strain MIT 9211), this protein is NAD(P)H-quinone oxidoreductase subunit N.